A 317-amino-acid chain; its full sequence is Melanocyte-stimulating hormone receptor (317 aa).

Over 1–37 (MPVQGSLRSLVGAVNSTPTASPHLRPATNQTEPQCLE) the chain is Extracellular. Asn-29 carries N-linked (GlcNAc...) asparagine glycosylation. Residues 38–63 (VSVPVGLFLCLGLVSLVENTLVVAVI) form a helical membrane-spanning segment. The Cytoplasmic segment spans residues 64 to 72 (AKNRNLHSP). A helical transmembrane segment spans residues 73–93 (MYCFICCLALSDLLVSVSNVL). Residues 94–118 (KTAVLLLLEAGALAAQATVVQQLGN) lie on the Extracellular side of the membrane. A helical transmembrane segment spans residues 119-140 (VINMLICSSMVSSLCFLGAIAM). Topologically, residues 141–163 (DRYISIFYALRYHSIVTLARARR) are cytoplasmic. Residues 164-183 (AIAAVWVASILSSILFFTYY) form a helical membrane-spanning segment. At 184-191 (DRTAALLC) the chain is on the extracellular side. Residues 192 to 211 (LVVFFLAMLVLMAVLYVHML) traverse the membrane as a helical segment. Topologically, residues 212 to 240 (TQACQHAQGIARLHKRQHPVQQGWGLKGA) are cytoplasmic. Residues 241 to 266 (ATLAVLLGVFFLCWGPLFLHLTLIAV) form a helical membrane-spanning segment. Over 267 to 279 (CPQHPTCNCIVKN) the chain is Extracellular. Residues 280-300 (FKLFLALIICNAIVDPLIYAF) form a helical membrane-spanning segment. Residues 301–317 (RSQELRKTLKEVLLFSW) are Cytoplasmic-facing.

The protein belongs to the G-protein coupled receptor 1 family. In terms of assembly, interacts with MGRN1, but does not undergo MGRN1-mediated ubiquitination; this interaction competes with GNAS-binding and thus inhibits agonist-induced cAMP production. Interacts with OPN3; the interaction results in a decrease in MC1R-mediated cAMP signaling and ultimately a decrease in melanin production in melanocytes.

It is found in the cell membrane. Receptor for MSH (alpha, beta and gamma) and ACTH. The activity of this receptor is mediated by G proteins which activate adenylate cyclase. Mediates melanogenesis, the production of eumelanin (black/brown) and phaeomelanin (red/yellow), via regulation of cAMP signaling in melanocytes. The polypeptide is Melanocyte-stimulating hormone receptor (MC1R) (Varecia rubra (Red ruffed lemur)).